The sequence spans 100 residues: Small ribosomal subunit protein uS14c (100 aa).

The protein belongs to the universal ribosomal protein uS14 family. As to quaternary structure, part of the 30S ribosomal subunit.

The protein resides in the plastid. Its subcellular location is the chloroplast. In terms of biological role, binds 16S rRNA, required for the assembly of 30S particles. This Huperzia lucidula (Shining clubmoss) protein is Small ribosomal subunit protein uS14c.